The following is a 735-amino-acid chain: Zinc finger CCCH domain-containing protein 14 (735 aa).

Met-1 is modified (N-acetylmethionine). Residues 78 to 153 (TEPSSLKSPD…RHSYDDGAST (76 aa)) are disordered. Position 85 is a phosphoserine (Ser-85). Residues Lys-99, Lys-139, Lys-175, and Lys-198 each participate in a glycyl lysine isopeptide (Lys-Gly) (interchain with G-Cter in SUMO2) cross-link. The segment covering 131 to 144 (VSTSSQEQKSTNVR) has biased composition (polar residues). The residue at position 240 (Ser-240) is a Phosphoserine. Glycyl lysine isopeptide (Lys-Gly) (interchain with G-Cter in SUMO2) cross-links involve residues Lys-245, Lys-283, and Lys-295. The tract at residues 308-351 (FSHDGEEEEEDEDYGTRIGSLSSSVSVPAKPERRPSLPPSKQAN) is disordered. Phosphoserine is present on residues Ser-309, Ser-327, and Ser-343. Lys-357 carries the post-translational modification N6-acetyllysine; alternate. Lys-357 participates in a covalent cross-link: Glycyl lysine isopeptide (Lys-Gly) (interchain with G-Cter in SUMO2); alternate. Lys-378 is covalently cross-linked (Glycyl lysine isopeptide (Lys-Gly) (interchain with G-Cter in SUMO2)). Phosphoserine occurs at positions 390 and 409. Positions 399–431 (VQGQNRAPRISPPVKEEEAKGDNTGKSQGTQQR) are disordered. Basic and acidic residues predominate over residues 412–421 (VKEEEAKGDN). Lys-413 is covalently cross-linked (Glycyl lysine isopeptide (Lys-Gly) (interchain with G-Cter in SUMO2)). The segment covering 422-431 (TGKSQGTQQR) has biased composition (polar residues). Lys-489 is covalently cross-linked (Glycyl lysine isopeptide (Lys-Gly) (interchain with G-Cter in SUMO2)). Residues Ser-498, Ser-515, Ser-527, and Ser-620 each carry the phosphoserine modification. C3H1-type zinc fingers lie at residues 595-620 (EKLL…HPIS), 621-640 (PCKA…VHPN), 641-656 (CKYD…PFTH), 681-698 (CRYF…YHPK), and 700-718 (CRFN…HPTI).

This sequence belongs to the ZC3H14 family. As to quaternary structure, homodimer; facilitating circular RNAs (circRNAs) formation. Associates with the spliceosome. Interacts with HOOK2. Interacts with ZFC3H1 in a RNase-sensitive manner. Expressed in hippocampal pyramidal neurons (at protein level). Expressed in kidney, liver, muscle, heart brain and testes. Expressed in hippocampal pyramidal neurons.

The protein localises to the nucleus speckle. RNA-binding protein involved in the biogenesis of circular RNAs (circRNAs), which are produced by back-splicing circularization of pre-mRNAs. Acts by binding to both exon-intron boundary and 3'-UTR of pre-mRNAs to promote circRNA biogenesis through dimerization and the association with the spliceosome. Required for spermatogenesis via involvement in circRNA biogenesis. Regulates the pre-mRNA processing of ATP5MC1; preventing its degradation. Also binds the poly(A) tail of mRNAs; controlling poly(A) length in neuronal cells. In Mus musculus (Mouse), this protein is Zinc finger CCCH domain-containing protein 14.